Here is a 2092-residue protein sequence, read N- to C-terminus: RNA-directed RNA polymerase L (2092 aa).

The tract at residues 18–215 (VPIKHFDCTM…ELSSTDEELG (198 aa)) is endonuclease. Mn(2+) contacts are provided by histidine 79, aspartate 111, and glutamate 125. Lysine 143 acts as the For endonuclease activity in catalysis. Residues 975 to 1166 (ARKQCKGPVW…AICFRMKKEL (192 aa)) form the RdRp catalytic domain. Aspartate 1134 is a Mg(2+) binding site. Residues 1706-1822 (GAGTVGGFIK…PFGCPVYIIK (117 aa)) are cap-binding.

This sequence belongs to the Bunyavirales RNA polymerase family. In terms of assembly, homomultimer. Interacts with glycoprotein N; this interaction allows efficient polymerase packaging into virus particles. Interacts with nucleoprotein N. It depends on Mn(2+) as a cofactor. Mg(2+) is required as a cofactor.

Its subcellular location is the host Golgi apparatus. The protein resides in the host endoplasmic reticulum. The protein localises to the host endoplasmic reticulum-Golgi intermediate compartment. It is found in the virion. It carries out the reaction RNA(n) + a ribonucleoside 5'-triphosphate = RNA(n+1) + diphosphate. RNA-dependent RNA polymerase, which is responsible for the replication and transcription of the viral RNA genome using antigenomic RNA as an intermediate. During transcription, synthesizes subgenomic RNAs and assures their capping by a cap-snatching mechanism, which involves the endonuclease activity cleaving the host capped pre-mRNAs. These short capped RNAs are then used as primers for viral transcription. The 3'-end of subgenomic mRNAs molecules are not polyadenylated. During replication, the polymerase binds the 5' and 3' vRNA extremities at distinct sites. In turn, significant conformational changes occur in the polymerase and in vRNA to initiate active RNA synthesis. As a consequence of the use of the same enzyme for both transcription and replication, these mechanisms need to be well coordinated. This is RNA-directed RNA polymerase L from Aedes (Bovine).